We begin with the raw amino-acid sequence, 191 residues long: Glutathione-dependent formaldehyde-activating enzyme (191 aa).

The region spanning 22 to 169 (FQGGTLECHC…LTELGLPPYD (148 aa)) is the CENP-V/GFA domain. Zn(2+) is bound by residues Cys-29, Cys-31, Cys-50, Cys-52, Cys-55, Cys-97, and Cys-100.

Belongs to the Gfa family. Zn(2+) is required as a cofactor.

The catalysed reaction is S-(hydroxymethyl)glutathione = glutathione + formaldehyde. The protein operates within one-carbon metabolism; formaldehyde degradation; formate from formaldehyde (glutathione route): step 1/3. Its function is as follows. Catalyzes the condensation of formaldehyde and glutathione to S-hydroxymethylglutathione. In Xanthomonas axonopodis pv. citri (strain 306), this protein is Glutathione-dependent formaldehyde-activating enzyme.